Reading from the N-terminus, the 217-residue chain is Probable transaldolase (217 aa).

Catalysis depends on Lys-84, which acts as the Schiff-base intermediate with substrate.

This sequence belongs to the transaldolase family. Type 3B subfamily.

The protein localises to the cytoplasm. The catalysed reaction is D-sedoheptulose 7-phosphate + D-glyceraldehyde 3-phosphate = D-erythrose 4-phosphate + beta-D-fructose 6-phosphate. The protein operates within carbohydrate degradation; pentose phosphate pathway; D-glyceraldehyde 3-phosphate and beta-D-fructose 6-phosphate from D-ribose 5-phosphate and D-xylulose 5-phosphate (non-oxidative stage): step 2/3. In terms of biological role, transaldolase is important for the balance of metabolites in the pentose-phosphate pathway. In Roseiflexus sp. (strain RS-1), this protein is Probable transaldolase.